We begin with the raw amino-acid sequence, 180 residues long: Amnesiac neuropeptides (180 aa).

The first 32 residues, 1-32, serve as a signal peptide directing secretion; the sequence is MRSFCCCFYPAAVALHCVLLFYTFFLLFRASA. Propeptides lie at residues 33 to 35 and 152 to 180; these read LRR and GRRS…GEMR. A disordered region spans residues 155–180; sequence SVPRGQPKFSRENPRALSPSLLGEMR.

As to expression, enriched expression in the embryonic and larval nervous systems. Strongly expressed in two large neurons that project over all the lobes of the mushroom bodies.

The protein localises to the secreted. In terms of biological role, required for associative learning and memory in adults. Expression pattern suggests a modulatory role in memory formation. Controls neurotransmitter-mediated signaling pathways associated with the structure of the larval peripheral nerve. The polypeptide is Amnesiac neuropeptides (amn) (Drosophila melanogaster (Fruit fly)).